A 622-amino-acid polypeptide reads, in one-letter code: Glutamyl-tRNA(Gln) amidotransferase subunit B, mitochondrial (622 aa).

The N-terminal 54 residues, 1–54 (MSRIPTRELGRYLLQGQICQRGCVASSVSKSRAKQLGRHPLLPHDRHQPTQARH), are a transit peptide targeting the mitochondrion. The tract at residues 30 to 67 (KSRAKQLGRHPLLPHDRHQPTQARHAHTVTTTATPTQL) is disordered. A compositionally biased stretch (low complexity) spans 57–67 (TVTTTATPTQL).

This sequence belongs to the GatB/GatE family. GatB subfamily. Subunit of the heterotrimeric GatCAB amidotransferase (AdT) complex, composed of A, B and C subunits.

The protein localises to the mitochondrion. The enzyme catalyses L-glutamyl-tRNA(Gln) + L-glutamine + ATP + H2O = L-glutaminyl-tRNA(Gln) + L-glutamate + ADP + phosphate + H(+). Allows the formation of correctly charged Gln-tRNA(Gln) through the transamidation of misacylated Glu-tRNA(Gln) in the mitochondria. The reaction takes place in the presence of glutamine and ATP through an activated gamma-phospho-Glu-tRNA(Gln). The sequence is that of Glutamyl-tRNA(Gln) amidotransferase subunit B, mitochondrial from Verticillium alfalfae (strain VaMs.102 / ATCC MYA-4576 / FGSC 10136) (Verticillium wilt of alfalfa).